The following is a 144-amino-acid chain: D-aminoacyl-tRNA deacylase (144 aa).

Residues glycine 136 to proline 137 carry the Gly-cisPro motif, important for rejection of L-amino acids motif.

Belongs to the DTD family. Homodimer.

The protein resides in the cytoplasm. The catalysed reaction is glycyl-tRNA(Ala) + H2O = tRNA(Ala) + glycine + H(+). It catalyses the reaction a D-aminoacyl-tRNA + H2O = a tRNA + a D-alpha-amino acid + H(+). An aminoacyl-tRNA editing enzyme that deacylates mischarged D-aminoacyl-tRNAs. Also deacylates mischarged glycyl-tRNA(Ala), protecting cells against glycine mischarging by AlaRS. Acts via tRNA-based rather than protein-based catalysis; rejects L-amino acids rather than detecting D-amino acids in the active site. By recycling D-aminoacyl-tRNA to D-amino acids and free tRNA molecules, this enzyme counteracts the toxicity associated with the formation of D-aminoacyl-tRNA entities in vivo and helps enforce protein L-homochirality. The chain is D-aminoacyl-tRNA deacylase from Histophilus somni (strain 129Pt) (Haemophilus somnus).